Here is a 313-residue protein sequence, read N- to C-terminus: Methionyl-tRNA formyltransferase (313 aa).

A (6S)-5,6,7,8-tetrahydrofolate-binding site is contributed by 109-112 (SLLP).

It belongs to the Fmt family.

It carries out the reaction L-methionyl-tRNA(fMet) + (6R)-10-formyltetrahydrofolate = N-formyl-L-methionyl-tRNA(fMet) + (6S)-5,6,7,8-tetrahydrofolate + H(+). Functionally, attaches a formyl group to the free amino group of methionyl-tRNA(fMet). The formyl group appears to play a dual role in the initiator identity of N-formylmethionyl-tRNA by promoting its recognition by IF2 and preventing the misappropriation of this tRNA by the elongation apparatus. The sequence is that of Methionyl-tRNA formyltransferase from Pelotomaculum thermopropionicum (strain DSM 13744 / JCM 10971 / SI).